Consider the following 691-residue polypeptide: Elongation factor G (691 aa).

The 276-residue stretch at 8–283 (KKVRNIGIAA…AVVAYLPAPD (276 aa)) folds into the tr-type G domain. GTP is bound by residues 17 to 24 (AHIDAGKT), 81 to 85 (DTPGH), and 135 to 138 (NKMD).

It belongs to the TRAFAC class translation factor GTPase superfamily. Classic translation factor GTPase family. EF-G/EF-2 subfamily.

Its subcellular location is the cytoplasm. Catalyzes the GTP-dependent ribosomal translocation step during translation elongation. During this step, the ribosome changes from the pre-translocational (PRE) to the post-translocational (POST) state as the newly formed A-site-bound peptidyl-tRNA and P-site-bound deacylated tRNA move to the P and E sites, respectively. Catalyzes the coordinated movement of the two tRNA molecules, the mRNA and conformational changes in the ribosome. This is Elongation factor G from Campylobacter jejuni subsp. jejuni serotype O:6 (strain 81116 / NCTC 11828).